A 389-amino-acid chain; its full sequence is 3-ketoacyl-CoA thiolase (389 aa).

The Acyl-thioester intermediate role is filled by C91. Active-site proton acceptor residues include H343 and C373.

It belongs to the thiolase-like superfamily. Thiolase family. In terms of assembly, heterotetramer of two alpha chains (FadB) and two beta chains (FadA).

It localises to the cytoplasm. The catalysed reaction is an acyl-CoA + acetyl-CoA = a 3-oxoacyl-CoA + CoA. It functions in the pathway lipid metabolism; fatty acid beta-oxidation. Functionally, catalyzes the final step of fatty acid oxidation in which acetyl-CoA is released and the CoA ester of a fatty acid two carbons shorter is formed. The polypeptide is 3-ketoacyl-CoA thiolase (Pseudoalteromonas translucida (strain TAC 125)).